The sequence spans 429 residues: Adenylosuccinate synthetase (429 aa).

Residues 12 to 18 (GDEGKGK) and 40 to 42 (GHT) contribute to the GTP site. Catalysis depends on D13, which acts as the Proton acceptor. Mg(2+) is bound by residues D13 and G40. Residues 13-16 (DEGK), 38-41 (NAGH), T128, R142, Q223, T238, and R302 contribute to the IMP site. The active-site Proton donor is H41. 298–304 (TVTGRPR) serves as a coordination point for substrate. GTP contacts are provided by residues R304, 330–332 (LLD), and 412–414 (SVG).

This sequence belongs to the adenylosuccinate synthetase family. In terms of assembly, homodimer. Mg(2+) serves as cofactor.

It localises to the cytoplasm. It carries out the reaction IMP + L-aspartate + GTP = N(6)-(1,2-dicarboxyethyl)-AMP + GDP + phosphate + 2 H(+). Its pathway is purine metabolism; AMP biosynthesis via de novo pathway; AMP from IMP: step 1/2. Plays an important role in the de novo pathway of purine nucleotide biosynthesis. Catalyzes the first committed step in the biosynthesis of AMP from IMP. The sequence is that of Adenylosuccinate synthetase from Limosilactobacillus fermentum (strain NBRC 3956 / LMG 18251) (Lactobacillus fermentum).